Consider the following 63-residue polypeptide: Large ribosomal subunit protein bL28c (63 aa).

It belongs to the bacterial ribosomal protein bL28 family.

The protein localises to the plastid. It is found in the chloroplast. In Porphyra purpurea (Red seaweed), this protein is Large ribosomal subunit protein bL28c (rpl28).